We begin with the raw amino-acid sequence, 371 residues long: uncharacterized protein (371 aa).

The 4Fe-4S ferredoxin-type domain maps to Met110 to Leu140.

This is an uncharacterized protein from Methanocaldococcus jannaschii (strain ATCC 43067 / DSM 2661 / JAL-1 / JCM 10045 / NBRC 100440) (Methanococcus jannaschii).